The sequence spans 554 residues: Arginine--tRNA ligase (554 aa).

A 'HIGH' region motif is present at residues 130–140 (ANPTGDLHIGH).

Belongs to the class-I aminoacyl-tRNA synthetase family. Monomer.

The protein resides in the cytoplasm. It catalyses the reaction tRNA(Arg) + L-arginine + ATP = L-arginyl-tRNA(Arg) + AMP + diphosphate. In Staphylococcus carnosus (strain TM300), this protein is Arginine--tRNA ligase.